The following is a 920-amino-acid chain: Vacuolar membrane protease (920 aa).

The Cytoplasmic portion of the chain corresponds to 1–20 (MASSRAQRFNPIAFTPWPVT). The helical transmembrane segment at 21–41 (CITTIVYLALLIPILVINLVV) threads the bilayer. Residues 42-378 (PSAPETNPKG…AFAVFRLHTL (337 aa)) lie on the Vacuolar side of the membrane. 3 N-linked (GlcNAc...) asparagine glycosylation sites follow: asparagine 53, asparagine 116, and asparagine 119. The Zn(2+) site is built by histidine 175 and aspartate 187. The Proton acceptor role is filled by glutamate 221. Glutamate 222 is a binding site for Zn(2+). An N-linked (GlcNAc...) asparagine glycan is attached at asparagine 238. The Zn(2+) site is built by glutamate 247 and histidine 306. The chain crosses the membrane as a helical span at residues 379 to 399 (FAISVALLVIAPLVIFITSVI). Topologically, residues 400–433 (LSKTDRMYLFSMSKSLEGTGDQVSLRGLRGFSRT) are cytoplasmic. A helical membrane pass occupies residues 434–454 (PIILVIATTIPICLAYLLEKV). Residues 455 to 463 (NPYIVHSSQ) are Vacuolar-facing. The chain crosses the membrane as a helical span at residues 464–484 (FSVWSMMFSAWIFLAWFLACA). Residues 485–495 (ADFFRPSALHR) lie on the Cytoplasmic side of the membrane. Residues 496 to 516 (AYSYTWIFVATWIMLVINTVY) traverse the membrane as a helical segment. At 517–520 (ANQK) the chain is on the vacuolar side. Residues 521–541 (GIAAGYFLLFYFAGAFLATWI) form a helical membrane-spanning segment. Over 542-659 (SYLELFALPR…TLPRWTWVLQ (118 aa)) the chain is Cytoplasmic. The disordered stretch occupies residues 556 to 605 (ARQTTGRRPSSLSSRLLTSSADELRSNASPSTAEFPGAAGEDTDPTESTS). Low complexity predominate over residues 559-575 (TTGRRPSSLSSRLLTSS). Residues 660–680 (LLLLAPIVLILVGQLALFLTA) form a helical membrane-spanning segment. Residues 681 to 693 (SMCQVGSDGVSTF) are Vacuolar-facing. A helical membrane pass occupies residues 694-714 (VVYLACAVFTTLLCIPLFPLI). Over 715 to 720 (HRFTYH) the chain is Cytoplasmic. The chain crosses the membrane as a helical span at residues 721-741 (IPTFLFLVFIGTLIYNLVAFP). Over 742–920 (FSPANRLKTF…VEASHSFTIQ (179 aa)) the chain is Vacuolar. N-linked (GlcNAc...) asparagine glycosylation is found at asparagine 760, asparagine 788, and asparagine 832.

This sequence belongs to the peptidase M28 family. Zn(2+) serves as cofactor.

It localises to the vacuole membrane. In terms of biological role, may be involved in vacuolar sorting and osmoregulation. The protein is Vacuolar membrane protease of Ajellomyces capsulatus (strain H143) (Darling's disease fungus).